The primary structure comprises 375 residues: 23S rRNA (uracil(747)-C(5))-methyltransferase RlmC (375 aa).

[4Fe-4S] cluster is bound by residues C3, C11, C14, and C87. Residues Q212, F241, E262, and N307 each contribute to the S-adenosyl-L-methionine site. The active-site Nucleophile is the C334.

This sequence belongs to the class I-like SAM-binding methyltransferase superfamily. RNA M5U methyltransferase family. RlmC subfamily.

It catalyses the reaction uridine(747) in 23S rRNA + S-adenosyl-L-methionine = 5-methyluridine(747) in 23S rRNA + S-adenosyl-L-homocysteine + H(+). In terms of biological role, catalyzes the formation of 5-methyl-uridine at position 747 (m5U747) in 23S rRNA. In Xenorhabdus nematophila (strain ATCC 19061 / DSM 3370 / CCUG 14189 / LMG 1036 / NCIMB 9965 / AN6), this protein is 23S rRNA (uracil(747)-C(5))-methyltransferase RlmC.